Consider the following 86-residue polypeptide: High affinity immunoglobulin epsilon receptor subunit gamma (86 aa).

The first 18 residues, 1–18 (MISAVILFLLLLVEQAAA), serve as a signal peptide directing secretion. Over 19 to 23 (LGEPQ) the chain is Extracellular. Residues 24–44 (LCYILDAVLFLYGIVLTLLYC) traverse the membrane as a helical segment. Residues 45–86 (RLKIQVRKAAIASREKADAVYTGLNTRSQETYETLKHEKPPQ) are Cytoplasmic-facing. One can recognise an ITAM domain in the interval 54–82 (AIASREKADAVYTGLNTRSQETYETLKHE). Residues Tyr-65 and Tyr-76 each carry the phosphotyrosine modification. Thr-78 is modified (phosphothreonine).

It belongs to the CD3Z/FCER1G family. As to quaternary structure, igE Fc receptor is a tetramer of an alpha chain, a beta chain, and two disulfide linked gamma chains. Associates with FCGR1A; forms a functional signaling complex. The signaling subunit of immunoglobulin gamma (IgG) Fc receptor complex. As a homodimer or a heterodimer of CD247 and FCER1G, associates with the ligand binding subunit FCGR3A to form a functional receptor complex. Associates with CLEC6A. Interacts with CLEC4E. Interacts (via ITAM domain) with SYK (via SH2 domains); activates SYK, enabling integrin-mediated activation of neutrophils and macrophages. Interacts with CSF2RB and recruits SYK in response to IL3 stimulation; this interaction is direct. Interacts with CD300LH; the interaction may be indirect. Interacts with CD300LD. Interacts with TARM1. Expressed in mast cells (at protein level). Expressed in basophils (at protein level).

It is found in the cell membrane. Functionally, adapter protein containing an immunoreceptor tyrosine-based activation motif (ITAM) that transduces activation signals from various immunoreceptors. As a component of the high-affinity immunoglobulin E (IgE) receptor, mediates allergic inflammatory signaling in mast cells. As a constitutive component of interleukin-3 receptor complex, selectively mediates interleukin 4/IL4 production by basophils, priming T-cells toward effector T-helper 2 subset. Associates with pattern recognition receptors CLEC4D and CLEC4E to form a functional signaling complex in myeloid cells. Binding of mycobacterial trehalose 6,6'-dimycolate (TDM) to this receptor complex leads to phosphorylation of ITAM, triggering activation of SYK, CARD9 and NF-kappa-B, consequently driving maturation of antigen-presenting cells and shaping antigen-specific priming of T-cells toward effector T-helper 1 and T-helper 17 cell subtypes. May function cooperatively with other activating receptors. Functionally linked to integrin beta-2/ITGB2-mediated neutrophil activation. Also involved in integrin alpha-2/ITGA2-mediated platelet activation. The protein is High affinity immunoglobulin epsilon receptor subunit gamma of Mus musculus (Mouse).